The following is a 190-amino-acid chain: MAEETNQSLEDQNVQVEEGQTISDEAIEQAVEGAEKELDNAKKEIESLKDSWLRERAEFQNYKRRTANDLLNARKESIKKFAEGLTGALDNLERVSNVPNQTPEVVAFVEGIKMVQKEFYSVLEKEGIKRLDPKGQPFDPMLMEAIASEESAEFTEETVVETYQAGYYHEEGESKQSIRPARVKVGKPQS.

Disordered stretches follow at residues 1-22 (MAEE…GQTI) and 170-190 (EEGE…KPQS). A compositionally biased stretch (basic residues) spans 181-190 (ARVKVGKPQS).

This sequence belongs to the GrpE family. Homodimer.

The protein resides in the cytoplasm. Functionally, participates actively in the response to hyperosmotic and heat shock by preventing the aggregation of stress-denatured proteins, in association with DnaK and GrpE. It is the nucleotide exchange factor for DnaK and may function as a thermosensor. Unfolded proteins bind initially to DnaJ; upon interaction with the DnaJ-bound protein, DnaK hydrolyzes its bound ATP, resulting in the formation of a stable complex. GrpE releases ADP from DnaK; ATP binding to DnaK triggers the release of the substrate protein, thus completing the reaction cycle. Several rounds of ATP-dependent interactions between DnaJ, DnaK and GrpE are required for fully efficient folding. The polypeptide is Protein GrpE (Leptospira biflexa serovar Patoc (strain Patoc 1 / Ames)).